Here is a 171-residue protein sequence, read N- to C-terminus: MDRAQKEQVVEELGQIFDASGVVVVARYEGMTVAEMQDLRAQMRDAGGSVRVAKNRLAKIALDGKPCASIADYLTGMTVLAFSDDPVAAAKVADKYAKGNDKFVILGGAMGDTALDPAGVKAVAQMPSREELIASIVACIGAPASNIAGAIGAPASNIAGILATLEEREAA.

It belongs to the universal ribosomal protein uL10 family. In terms of assembly, part of the ribosomal stalk of the 50S ribosomal subunit. The N-terminus interacts with L11 and the large rRNA to form the base of the stalk. The C-terminus forms an elongated spine to which L12 dimers bind in a sequential fashion forming a multimeric L10(L12)X complex.

Functionally, forms part of the ribosomal stalk, playing a central role in the interaction of the ribosome with GTP-bound translation factors. This is Large ribosomal subunit protein uL10 from Paracoccus denitrificans (strain Pd 1222).